A 599-amino-acid chain; its full sequence is Histone-arginine methyltransferase CARMER (599 aa).

Positions 127–434 constitute an SAM-dependent MTase PRMT-type domain; sequence ASQYFQFYGY…QRQSYDVEID (308 aa). Glutamine 140, arginine 149, glycine 173, glutamate 195, glutamate 224, and threonine 252 together coordinate S-adenosyl-L-methionine. Asymmetric dimethylarginine; by autocatalysis is present on arginine 487.

Belongs to the class I-like SAM-binding methyltransferase superfamily. Protein arginine N-methyltransferase family. In terms of assembly, homodimer. In terms of processing, the dimethylated protein is the major form.

The protein resides in the cytoplasm. It is found in the nucleus. The catalysed reaction is L-arginyl-[protein] + 2 S-adenosyl-L-methionine = N(omega),N(omega)-dimethyl-L-arginyl-[protein] + 2 S-adenosyl-L-homocysteine + 2 H(+). Functionally, methylates (mono- and asymmetric dimethylation) the guanidino nitrogens of arginyl residues in proteins. May methylate histone H3 at 'Arg-17' and activate transcription via chromatin remodeling. The chain is Histone-arginine methyltransferase CARMER (Art4) from Culex quinquefasciatus (Southern house mosquito).